The following is a 320-amino-acid chain: o-succinylbenzoate synthase (320 aa).

The active-site Proton donor is K133. Positions 161, 190, and 213 each coordinate Mg(2+). The Proton acceptor role is filled by K235.

It belongs to the mandelate racemase/muconate lactonizing enzyme family. MenC type 1 subfamily. A divalent metal cation is required as a cofactor.

It catalyses the reaction (1R,6R)-6-hydroxy-2-succinyl-cyclohexa-2,4-diene-1-carboxylate = 2-succinylbenzoate + H2O. Its pathway is quinol/quinone metabolism; 1,4-dihydroxy-2-naphthoate biosynthesis; 1,4-dihydroxy-2-naphthoate from chorismate: step 4/7. It functions in the pathway quinol/quinone metabolism; menaquinone biosynthesis. Functionally, converts 2-succinyl-6-hydroxy-2,4-cyclohexadiene-1-carboxylate (SHCHC) to 2-succinylbenzoate (OSB). The sequence is that of o-succinylbenzoate synthase from Salmonella heidelberg (strain SL476).